The following is a 696-amino-acid chain: Polyribonucleotide nucleotidyltransferase (696 aa).

Positions 489 and 495 each coordinate Mg(2+). Positions 556–615 (PQYVTMKINPEKIRDVIGKGGVVIREITEATNCAIDISDDGTIKIAAHTTEEGEAAKRRI) constitute a KH domain. Positions 625–693 (GKVYEGTVVK…RQGRVRLSMK (69 aa)) constitute an S1 motif domain.

This sequence belongs to the polyribonucleotide nucleotidyltransferase family. In terms of assembly, component of the RNA degradosome, which is a multiprotein complex involved in RNA processing and mRNA degradation. The cofactor is Mg(2+).

Its subcellular location is the cytoplasm. The enzyme catalyses RNA(n+1) + phosphate = RNA(n) + a ribonucleoside 5'-diphosphate. Its function is as follows. Involved in mRNA degradation. Catalyzes the phosphorolysis of single-stranded polyribonucleotides processively in the 3'- to 5'-direction. The sequence is that of Polyribonucleotide nucleotidyltransferase from Coxiella burnetii (strain CbuG_Q212) (Coxiella burnetii (strain Q212)).